The sequence spans 211 residues: Protein-L-isoaspartate O-methyltransferase (211 aa).

Ser62 is an active-site residue.

This sequence belongs to the methyltransferase superfamily. L-isoaspartyl/D-aspartyl protein methyltransferase family.

It localises to the cytoplasm. It carries out the reaction [protein]-L-isoaspartate + S-adenosyl-L-methionine = [protein]-L-isoaspartate alpha-methyl ester + S-adenosyl-L-homocysteine. In terms of biological role, catalyzes the methyl esterification of L-isoaspartyl residues in peptides and proteins that result from spontaneous decomposition of normal L-aspartyl and L-asparaginyl residues. It plays a role in the repair and/or degradation of damaged proteins. In Shewanella sp. (strain ANA-3), this protein is Protein-L-isoaspartate O-methyltransferase.